Here is an 89-residue protein sequence, read N- to C-terminus: Small ribosomal subunit protein uS15 (89 aa).

It belongs to the universal ribosomal protein uS15 family. As to quaternary structure, part of the 30S ribosomal subunit. Forms a bridge to the 50S subunit in the 70S ribosome, contacting the 23S rRNA.

In terms of biological role, one of the primary rRNA binding proteins, it binds directly to 16S rRNA where it helps nucleate assembly of the platform of the 30S subunit by binding and bridging several RNA helices of the 16S rRNA. Its function is as follows. Forms an intersubunit bridge (bridge B4) with the 23S rRNA of the 50S subunit in the ribosome. This Pseudarthrobacter chlorophenolicus (strain ATCC 700700 / DSM 12829 / CIP 107037 / JCM 12360 / KCTC 9906 / NCIMB 13794 / A6) (Arthrobacter chlorophenolicus) protein is Small ribosomal subunit protein uS15.